The following is a 305-amino-acid chain: Aspartate carbamoyltransferase catalytic subunit (305 aa).

Positions 60 and 61 each coordinate carbamoyl phosphate. Lysine 88 provides a ligand contact to L-aspartate. Positions 110, 138, and 141 each coordinate carbamoyl phosphate. L-aspartate-binding residues include arginine 171 and arginine 222. Residues alanine 263 and proline 264 each contribute to the carbamoyl phosphate site.

This sequence belongs to the aspartate/ornithine carbamoyltransferase superfamily. ATCase family. Heterododecamer (2C3:3R2) of six catalytic PyrB chains organized as two trimers (C3), and six regulatory PyrI chains organized as three dimers (R2).

It carries out the reaction carbamoyl phosphate + L-aspartate = N-carbamoyl-L-aspartate + phosphate + H(+). It participates in pyrimidine metabolism; UMP biosynthesis via de novo pathway; (S)-dihydroorotate from bicarbonate: step 2/3. Functionally, catalyzes the condensation of carbamoyl phosphate and aspartate to form carbamoyl aspartate and inorganic phosphate, the committed step in the de novo pyrimidine nucleotide biosynthesis pathway. In Halalkalibacterium halodurans (strain ATCC BAA-125 / DSM 18197 / FERM 7344 / JCM 9153 / C-125) (Bacillus halodurans), this protein is Aspartate carbamoyltransferase catalytic subunit.